The chain runs to 345 residues: Anthranilate phosphoribosyltransferase (345 aa).

5-phospho-alpha-D-ribose 1-diphosphate is bound by residues Gly80, 83–84 (GD), Thr88, 90–93 (NIST), 108–116 (KHGNRSVTS), and Ser120. Gly80 provides a ligand contact to anthranilate. Position 92 (Ser92) interacts with Mg(2+). Anthranilate is bound at residue Asn111. Arg166 is an anthranilate binding site. Positions 229 and 230 each coordinate Mg(2+).

Belongs to the anthranilate phosphoribosyltransferase family. As to quaternary structure, homodimer. Mg(2+) serves as cofactor.

It catalyses the reaction N-(5-phospho-beta-D-ribosyl)anthranilate + diphosphate = 5-phospho-alpha-D-ribose 1-diphosphate + anthranilate. It functions in the pathway amino-acid biosynthesis; L-tryptophan biosynthesis; L-tryptophan from chorismate: step 2/5. Catalyzes the transfer of the phosphoribosyl group of 5-phosphorylribose-1-pyrophosphate (PRPP) to anthranilate to yield N-(5'-phosphoribosyl)-anthranilate (PRA). The protein is Anthranilate phosphoribosyltransferase of Chlorobium phaeobacteroides (strain BS1).